The sequence spans 414 residues: Putative L-lactate dehydrogenase (414 aa).

The 378-residue stretch at 29–406 (RRLGAALTIQ…SPRHVTQLRR (378 aa)) folds into the FMN hydroxy acid dehydrogenase domain. A 2-oxocarboxylate is bound at residue Tyr-55. FMN contacts are provided by Ser-137 and Gln-159. A 2-oxocarboxylate is bound at residue Tyr-161. An FMN-binding site is contributed by Thr-187. Residue Arg-196 participates in a 2-oxocarboxylate binding. Lys-277 serves as a coordination point for FMN. His-301 (proton acceptor) is an active-site residue. An a 2-oxocarboxylate-binding site is contributed by Arg-304. FMN contacts are provided by residues 332–336 (DTGIM) and 355–356 (GR).

This sequence belongs to the FMN-dependent alpha-hydroxy acid dehydrogenase family. The cofactor is FMN.

It carries out the reaction (S)-lactate + A = pyruvate + AH2. In Mycobacterium tuberculosis (strain ATCC 25618 / H37Rv), this protein is Putative L-lactate dehydrogenase (lldD).